A 563-amino-acid chain; its full sequence is Arginine--tRNA ligase (563 aa).

The 'HIGH' region motif lies at 122-132; that stretch reads PNIAKPISMGH.

This sequence belongs to the class-I aminoacyl-tRNA synthetase family. As to quaternary structure, monomer.

Its subcellular location is the cytoplasm. The catalysed reaction is tRNA(Arg) + L-arginine + ATP = L-arginyl-tRNA(Arg) + AMP + diphosphate. The chain is Arginine--tRNA ligase from Enterococcus faecalis (strain ATCC 700802 / V583).